The sequence spans 236 residues: 2,3,4,5-tetrahydropyridine-2,6-dicarboxylate N-acetyltransferase (236 aa).

The protein belongs to the transferase hexapeptide repeat family. DapH subfamily.

It carries out the reaction (S)-2,3,4,5-tetrahydrodipicolinate + acetyl-CoA + H2O = L-2-acetamido-6-oxoheptanedioate + CoA. The protein operates within amino-acid biosynthesis; L-lysine biosynthesis via DAP pathway; LL-2,6-diaminopimelate from (S)-tetrahydrodipicolinate (acetylase route): step 1/3. In terms of biological role, catalyzes the transfer of an acetyl group from acetyl-CoA to tetrahydrodipicolinate. The polypeptide is 2,3,4,5-tetrahydropyridine-2,6-dicarboxylate N-acetyltransferase (Lactobacillus acidophilus (strain ATCC 700396 / NCK56 / N2 / NCFM)).